Consider the following 259-residue polypeptide: 5'-nucleotidase SurE 1 (259 aa).

A divalent metal cation-binding residues include Asp-16, Asp-17, Ser-48, and Asn-101.

This sequence belongs to the SurE nucleotidase family. It depends on a divalent metal cation as a cofactor.

It localises to the cytoplasm. The enzyme catalyses a ribonucleoside 5'-phosphate + H2O = a ribonucleoside + phosphate. Nucleotidase that shows phosphatase activity on nucleoside 5'-monophosphates. The sequence is that of 5'-nucleotidase SurE 1 from Burkholderia lata (strain ATCC 17760 / DSM 23089 / LMG 22485 / NCIMB 9086 / R18194 / 383).